A 422-amino-acid polypeptide reads, in one-letter code: Serine--tRNA ligase (422 aa).

231 to 233 (TAE) lines the L-serine pocket. 261–263 (RSE) contacts ATP. Glu-284 serves as a coordination point for L-serine. Residue 348–351 (EISS) participates in ATP binding. L-serine is bound at residue Ser-383.

It belongs to the class-II aminoacyl-tRNA synthetase family. Type-1 seryl-tRNA synthetase subfamily. In terms of assembly, homodimer. The tRNA molecule binds across the dimer.

Its subcellular location is the cytoplasm. The enzyme catalyses tRNA(Ser) + L-serine + ATP = L-seryl-tRNA(Ser) + AMP + diphosphate + H(+). It catalyses the reaction tRNA(Sec) + L-serine + ATP = L-seryl-tRNA(Sec) + AMP + diphosphate + H(+). Its pathway is aminoacyl-tRNA biosynthesis; selenocysteinyl-tRNA(Sec) biosynthesis; L-seryl-tRNA(Sec) from L-serine and tRNA(Sec): step 1/1. Catalyzes the attachment of serine to tRNA(Ser). Is also able to aminoacylate tRNA(Sec) with serine, to form the misacylated tRNA L-seryl-tRNA(Sec), which will be further converted into selenocysteinyl-tRNA(Sec). The sequence is that of Serine--tRNA ligase from Mycoplasmopsis agalactiae (strain NCTC 10123 / CIP 59.7 / PG2) (Mycoplasma agalactiae).